The following is a 319-amino-acid chain: Chromoplast-specific carotenoid-associated protein C2, chromoplastic (319 aa).

Residues 1 to 55 (MTSIAFCNAFTVNPFLAAARRSPPPLTPLTSVALSPARKPRILAIFHPRTFPSFR) constitute a chromoplast transit peptide.

This sequence belongs to the PAP/fibrillin family.

Its subcellular location is the plastid. It is found in the chromoplast. Functionally, may be involved in carotenoid sequestration within chromoplasts. The protein is Chromoplast-specific carotenoid-associated protein C2, chromoplastic (CHRC2) of Oncidium hybrid cultivar (Orchid).